The chain runs to 155 residues: Ciliary microtubule inner protein 2C (155 aa).

Belongs to the CIMIP2 family.

It is found in the cytoplasm. It localises to the cytoskeleton. The protein localises to the cilium axoneme. Functionally, microtubule inner protein (MIP) part of the dynein-decorated doublet microtubules (DMTs) in cilia axoneme, which is required for motile cilia beating. The polypeptide is Ciliary microtubule inner protein 2C (cimip2ca) (Xenopus laevis (African clawed frog)).